The primary structure comprises 311 residues: Ribosomal protein L11 methyltransferase (311 aa).

The S-adenosyl-L-methionine site is built by Thr-163, Gly-184, Asp-206, and Asn-248.

Belongs to the methyltransferase superfamily. PrmA family.

The protein resides in the cytoplasm. It carries out the reaction L-lysyl-[protein] + 3 S-adenosyl-L-methionine = N(6),N(6),N(6)-trimethyl-L-lysyl-[protein] + 3 S-adenosyl-L-homocysteine + 3 H(+). Its function is as follows. Methylates ribosomal protein L11. The polypeptide is Ribosomal protein L11 methyltransferase (Clostridium acetobutylicum (strain ATCC 824 / DSM 792 / JCM 1419 / IAM 19013 / LMG 5710 / NBRC 13948 / NRRL B-527 / VKM B-1787 / 2291 / W)).